We begin with the raw amino-acid sequence, 585 residues long: Probable inactive serine/threonine-protein kinase slob1 (585 aa).

Residues 21 to 82 form an FYVE-type zinc finger; sequence DQSSLECNDC…LCRSCNNSFE (62 aa). The Zn(2+) site is built by C27, C30, C43, C46, C51, C54, C74, and C77. The Protein kinase domain occupies 108-478; it reads SKPLQDIGHT…STSLLNNSFN (371 aa). Low complexity-rich tracts occupy residues 426–456 and 466–503; these read ISKL…NISS and LPSS…ISSP. A disordered region spans residues 426-585; that stretch reads ISKLSSSSSN…SLKPSSTKKK (160 aa). The span at 513 to 532 shows a compositional bias: pro residues; the sequence is TPPPPPPPPKSAPPPPPPPS. Residues 533-542 are compositionally biased toward low complexity; the sequence is SSKLPPSSSS. Positions 542 to 562 constitute a WH2 domain; that stretch reads SRNSLLESIRNADNAKKLKKT.

It belongs to the protein kinase superfamily. Ser/Thr protein kinase family.

This Dictyostelium discoideum (Social amoeba) protein is Probable inactive serine/threonine-protein kinase slob1 (slob1).